The chain runs to 375 residues: Chaperone protein DnaJ (375 aa).

The 66-residue stretch at 4 to 69 (DLYETLGVQK…QKRAAYDRYG (66 aa)) folds into the J domain. The CR-type zinc-finger motif lies at 133-211 (GKTAQIRVPT…CHGQGRVVEE (79 aa)). Residues Cys146, Cys149, Cys163, Cys166, Cys185, Cys188, Cys199, and Cys202 each coordinate Zn(2+). CXXCXGXG motif repeat units lie at residues 146–153 (CDVCTGTG), 163–170 (CGTCQGTG), 185–192 (CPTCGGRG), and 199–206 (CTKCHGQG).

Belongs to the DnaJ family. In terms of assembly, homodimer. It depends on Zn(2+) as a cofactor.

It is found in the cytoplasm. In terms of biological role, participates actively in the response to hyperosmotic and heat shock by preventing the aggregation of stress-denatured proteins and by disaggregating proteins, also in an autonomous, DnaK-independent fashion. Unfolded proteins bind initially to DnaJ; upon interaction with the DnaJ-bound protein, DnaK hydrolyzes its bound ATP, resulting in the formation of a stable complex. GrpE releases ADP from DnaK; ATP binding to DnaK triggers the release of the substrate protein, thus completing the reaction cycle. Several rounds of ATP-dependent interactions between DnaJ, DnaK and GrpE are required for fully efficient folding. Also involved, together with DnaK and GrpE, in the DNA replication of plasmids through activation of initiation proteins. This chain is Chaperone protein DnaJ, found in Sinorhizobium medicae (strain WSM419) (Ensifer medicae).